Reading from the N-terminus, the 143-residue chain is MFMGEYHHNLDSKGRLIIPAKFRDEIGEKMVFTRGMEGCIFGYPIEEWQKIEAKLAKLPLTKRSARKFTRLFYSGAMESEFDKQGRVNLTMTLKEHAALIKECVIVGVSNRIEIWSAERWNDFSEEANENYDDIAEDLDDIEL.

SpoVT-AbrB domains follow at residues 5 to 47 (EYHH…PIEE) and 76 to 119 (AMES…SAER).

This sequence belongs to the MraZ family. In terms of assembly, forms oligomers.

The protein localises to the cytoplasm. Its subcellular location is the nucleoid. In Lactobacillus gasseri (strain ATCC 33323 / DSM 20243 / BCRC 14619 / CIP 102991 / JCM 1131 / KCTC 3163 / NCIMB 11718 / NCTC 13722 / AM63), this protein is Transcriptional regulator MraZ.